A 293-amino-acid polypeptide reads, in one-letter code: MPELPEVETVRKGLEQKLKNFIIKRVEICRESTVAYPIDKQDFVKGLQNSLINKWDRRGKYLIAKLKKADRNHTYIENEMSLKNNGSLVVHLRMTGYFTFNKNPTSPCKHTRIRLFDNNNNELRYIDVRSFGQMWWVREGLSPKNIIKGLGALGPEPFSEKFNISYLTKIILNKTRSIKSILLDQTIVAGIGNIYADESLYSAGISPFREARTIEKHELIKLRIAIIEVLKKSIGAGGTTFSDFRDLEGENGNFGLQTNVYRRTGKKCHACKNLIERQKISGRSTHWCRKCQK.

The active-site Schiff-base intermediate with DNA is the P2. The active-site Proton donor is the E3. K60 serves as the catalytic Proton donor; for beta-elimination activity. Positions 110, 129, and 174 each coordinate DNA. The segment at 259–293 (NVYRRTGKKCHACKNLIERQKISGRSTHWCRKCQK) adopts an FPG-type zinc-finger fold. The Proton donor; for delta-elimination activity role is filled by R283.

The protein belongs to the FPG family. Monomer. It depends on Zn(2+) as a cofactor.

The enzyme catalyses Hydrolysis of DNA containing ring-opened 7-methylguanine residues, releasing 2,6-diamino-4-hydroxy-5-(N-methyl)formamidopyrimidine.. It carries out the reaction 2'-deoxyribonucleotide-(2'-deoxyribose 5'-phosphate)-2'-deoxyribonucleotide-DNA = a 3'-end 2'-deoxyribonucleotide-(2,3-dehydro-2,3-deoxyribose 5'-phosphate)-DNA + a 5'-end 5'-phospho-2'-deoxyribonucleoside-DNA + H(+). Involved in base excision repair of DNA damaged by oxidation or by mutagenic agents. Acts as a DNA glycosylase that recognizes and removes damaged bases. Has a preference for oxidized purines, such as 7,8-dihydro-8-oxoguanine (8-oxoG). Has AP (apurinic/apyrimidinic) lyase activity and introduces nicks in the DNA strand. Cleaves the DNA backbone by beta-delta elimination to generate a single-strand break at the site of the removed base with both 3'- and 5'-phosphates. This chain is Formamidopyrimidine-DNA glycosylase, found in Prochlorococcus marinus (strain MIT 9515).